Reading from the N-terminus, the 82-residue chain is EMBRYO SURROUNDING FACTOR 1-like protein 10 (82 aa).

Positions 1–22 are cleaved as a signal peptide; it reads MSSLYFAILCLFMIFLVPLHEF. 4 cysteine pairs are disulfide-bonded: Cys-39/Cys-55, Cys-44/Cys-74, Cys-53/Cys-70, and Cys-56/Cys-63.

It belongs to the MEG family. In terms of tissue distribution, expressed in stems, leaves and flowers.

This chain is EMBRYO SURROUNDING FACTOR 1-like protein 10 (ESFL10), found in Arabidopsis thaliana (Mouse-ear cress).